Reading from the N-terminus, the 1733-residue chain is Desertorin synthase (1733 aa).

Positions 21 to 358 (RIRQQSRSSR…HAPTRDLTEW (338 aa)) are N-terminal acylcarrier protein transacylase domain (SAT). In terms of domain architecture, Ketosynthase family 3 (KS3) spans 372-799 (DCRIAVVGMS…GGNTALLLEE (428 aa)). Basic and acidic residues predominate over residues 406-422 (HVPPDRYDVQSHTDPTG). The interval 406-429 (HVPPDRYDVQSHTDPTGRRMNTSQ) is disordered. Residues cysteine 544, histidine 679, and histidine 718 each act as for beta-ketoacyl synthase activity in the active site. The tract at residues 903–1211 (FVFSGQGSFY…DNWHTLAGSM (309 aa)) is malonyl-CoA:ACP transacylase (MAT) domain. The tract at residues 1288–1420 (HRIVEETFWA…GTVSVGNAAS (133 aa)) is N-terminal hotdog fold. Residues 1288–1598 (HRIVEETFWA…LRPLPRILMH (311 aa)) enclose the PKS/mFAS DH domain. Residues 1299 to 1594 (GGRVVMESNV…AGVTLRPLPR (296 aa)) form a product template (PT) domain region. The Proton acceptor; for dehydratase activity role is filled by histidine 1320. A C-terminal hotdog fold region spans residues 1448–1598 (ADRLTRDTVY…LRPLPRILMH (151 aa)). Residue aspartate 1506 is the Proton donor; for dehydratase activity of the active site. The tract at residues 1608 to 1659 (HNWGNSPAKPEAKPEMVPTSGSSSAAGSPSGSSAGPLSIPERLADPSETSFQ) is disordered. Residues 1627 to 1643 (SGSSSAAGSPSGSSAGP) show a composition bias toward low complexity. The region spanning 1659–1733 (QSKASKVSKA…TVGEVKRQML (75 aa)) is the Carrier domain. Serine 1696 is modified (O-(pantetheine 4'-phosphoryl)serine).

The cofactor is pantetheine 4'-phosphate.

It participates in secondary metabolite biosynthesis. Non-reducing polyketide synthase; part of the gene cluster that mediates the biosynthesis of the bicoumarin desertorin. The non-reducing polyketide synthase desS first catalyzes the formation of the pentaketidic 4,7-dihydroxy-5-methylcoumarin from acetyl coenzyme A and 4 malonyl coenzyme A molecules. Further O-methylation by desB leads to the formation of 7-demethylsiderin. Then, an oxidative phenol coupling catalyzed by the cytochrome P450 monooxygenase desC forms the 6,8'-dimer M-desertorin A via dimerization the monomeric precursor, 7-demethylsiderin. M-desertorin A is further converted to M-desertorin C. In Aspergillus desertorum (Emericella desertorum), this protein is Desertorin synthase.